The primary structure comprises 701 residues: Elongation factor G (701 aa).

The tr-type G domain maps to 10–290 (AKVRNIGIMA…AVVDYLPSPL (281 aa)). GTP is bound by residues 19-26 (AHIDAGKT), 83-87 (DTPGH), and 137-140 (NKMD).

Belongs to the TRAFAC class translation factor GTPase superfamily. Classic translation factor GTPase family. EF-G/EF-2 subfamily.

It localises to the cytoplasm. Functionally, catalyzes the GTP-dependent ribosomal translocation step during translation elongation. During this step, the ribosome changes from the pre-translocational (PRE) to the post-translocational (POST) state as the newly formed A-site-bound peptidyl-tRNA and P-site-bound deacylated tRNA move to the P and E sites, respectively. Catalyzes the coordinated movement of the two tRNA molecules, the mRNA and conformational changes in the ribosome. This is Elongation factor G from Tropheryma whipplei (strain TW08/27) (Whipple's bacillus).